The following is a 537-amino-acid chain: Glutamyl-tRNA(Gln) amidotransferase subunit B, chloroplastic/mitochondrial (537 aa).

It belongs to the GatB/GatE family. GatB subfamily. In terms of assembly, subunit of the heterotrimeric GatCAB amidotransferase (AdT) complex, composed of A, B and C subunits.

It is found in the mitochondrion. The protein resides in the plastid. The protein localises to the chloroplast. The catalysed reaction is L-glutamyl-tRNA(Gln) + L-glutamine + ATP + H2O = L-glutaminyl-tRNA(Gln) + L-glutamate + ADP + phosphate + H(+). Functionally, allows the formation of correctly charged Gln-tRNA(Gln) through the transamidation of misacylated Glu-tRNA(Gln) in chloroplasts and mitochondria. The reaction takes place in the presence of glutamine and ATP through an activated gamma-phospho-Glu-tRNA(Gln). This Ostreococcus tauri protein is Glutamyl-tRNA(Gln) amidotransferase subunit B, chloroplastic/mitochondrial.